The following is a 231-amino-acid chain: Acyl-protein thioesterase 2 (231 aa).

A lipid anchor (S-palmitoyl cysteine) is attached at C2. Position 82 is a phosphoserine (S82). Catalysis depends on charge relay system residues S122, D176, and H210.

It belongs to the AB hydrolase superfamily. AB hydrolase 2 family. As to expression, expressed in various breast cancer cell lines.

The protein localises to the cytoplasm. It catalyses the reaction S-hexadecanoyl-L-cysteinyl-[protein] + H2O = L-cysteinyl-[protein] + hexadecanoate + H(+). It carries out the reaction prostaglandin E2 1-glyceryl ester + H2O = prostaglandin E2 + glycerol + H(+). The catalysed reaction is 1-hexadecanoyl-sn-glycero-3-phosphocholine + H2O = sn-glycerol 3-phosphocholine + hexadecanoate + H(+). The enzyme catalyses 1-octadecanoyl-sn-glycero-3-phosphocholine + H2O = octadecanoate + sn-glycerol 3-phosphocholine + H(+). It catalyses the reaction 1-hexadecanoyl-sn-glycero-3-phosphate + H2O = sn-glycerol 3-phosphate + hexadecanoate + H(+). It carries out the reaction 1-hexadecanoyl-sn-glycero-3-phospho-L-serine + H2O = sn-glycero-3-phospho-L-serine + hexadecanoate + H(+). Its activity is regulated as follows. Inhibited by compound 1 or (5,5-Dioxido-4H-thieno[3,2-c]thiochromen-2-yl)(4-(4-methoxyphenyl)piperazin-1-yl)methanone. Its function is as follows. Acts as an acyl-protein thioesterase hydrolyzing fatty acids from S-acylated cysteine residues in proteins such as trimeric G alpha proteins, GSDMD, GAP43, ZDHHC6 or HRAS. Deacylates GAP43. Mediates depalmitoylation of ZDHHC6. Has lysophospholipase activity. Hydrolyzes prostaglandin glycerol esters (PG-Gs) in the following order prostaglandin D2-glycerol ester (PGD2-G) &gt; prostaglandin E2 glycerol ester (PGE2-G) &gt; prostaglandin F2-alpha-glycerol ester (PGF2-alpha-G). Hydrolyzes 1-arachidonoylglycerol but not 2-arachidonoylglycerol or arachidonoylethanolamide. The protein is Acyl-protein thioesterase 2 (LYPLA2) of Homo sapiens (Human).